A 262-amino-acid chain; its full sequence is MSTSTHEMSPAAARAAFREGVAVPTTGYSDGYAQANLMVLPKEYAFDFLLFAQRNPKPCPILGVLEPGQLNSELLPGGDIRTDIPKYRVYRDGELAGEYPDVTEFWRDDLVSFLIGCSFTFEGALLDNGIPVAHIEQGRNVPMYKTSIPTARAGRFHGPLVVSMRPIPASQIADAVRVTSRYPAVHGAPVHVGDPAAIGISDLASPDYGDAVEIPDGHIPVFWACGVTPQAAVMETKPSLAIAHAPGHMLVTDARDLQYQVP.

It belongs to the D-glutamate cyclase family.

This Corynebacterium urealyticum (strain ATCC 43042 / DSM 7109) protein is Putative hydro-lyase cu1581.